Consider the following 254-residue polypeptide: Cobalt transport protein CbiM (254 aa).

A signal peptide spans 1 to 31 (MKTILRPFTLLSRSIFLALFVLFLWSPDAHA). A run of 6 helical transmembrane segments spans residues 37–57 (GFLPPSWSLFWWVLTLPFLVV), 74–94 (LLLAMAGAFAFVLSSLKIPSV), 106–126 (LGAVLFGPSVMSVLGVIVLLF), 128–148 (ALLLAHGGLTTLGANAFSMAI), 169–189 (WLAVFLAAAIGDLMTYVVTSL), and 212–232 (IFALTQVPLAISEGILTVMVF).

This sequence belongs to the CbiM family. In terms of assembly, forms an energy-coupling factor (ECF) transporter complex composed of an ATP-binding protein (A component, CbiO), a transmembrane protein (T component, CbiQ) and 2 possible substrate-capture proteins (S components, CbiM and CbiN) of unknown stoichimetry.

Its subcellular location is the cell inner membrane. It functions in the pathway cofactor biosynthesis; adenosylcobalamin biosynthesis. Its function is as follows. Part of the energy-coupling factor (ECF) transporter complex CbiMNOQ involved in cobalt import. This chain is Cobalt transport protein CbiM, found in Chlorobium limicola (strain DSM 245 / NBRC 103803 / 6330).